A 208-amino-acid chain; its full sequence is 2-dehydro-3-deoxy-phosphogluconate aldolase (208 aa).

Glu-41 acts as the Proton acceptor in catalysis. Residues Arg-45, Thr-68, and Lys-128 each contribute to the pyruvate site. Lys-128 functions as the Schiff-base intermediate with substrate in the catalytic mechanism.

Belongs to the KHG/KDPG aldolase family. Homotrimer.

The protein resides in the cytoplasm. It catalyses the reaction 2-dehydro-3-deoxy-6-phospho-D-gluconate = D-glyceraldehyde 3-phosphate + pyruvate. It participates in carbohydrate acid metabolism; 2-dehydro-3-deoxy-D-gluconate degradation; D-glyceraldehyde 3-phosphate and pyruvate from 2-dehydro-3-deoxy-D-gluconate: step 2/2. In terms of biological role, involved in the degradation of glucose via the Entner-Doudoroff pathway. Catalyzes the reversible, stereospecific retro-aldol cleavage of 2-keto-3-deoxy-6-phosphogluconate (KDPG) to pyruvate and D-glyceraldehyde-3-phosphate. In Zymomonas mobilis subsp. mobilis (strain ATCC 31821 / ZM4 / CP4), this protein is 2-dehydro-3-deoxy-phosphogluconate aldolase.